The following is a 179-amino-acid chain: UPF0200 protein TV0279 (179 aa).

Residue 6-13 (GMPGAGKD) participates in ATP binding.

Belongs to the UPF0200 family.

The sequence is that of UPF0200 protein TV0279 from Thermoplasma volcanium (strain ATCC 51530 / DSM 4299 / JCM 9571 / NBRC 15438 / GSS1).